The chain runs to 446 residues: Alpha-1,6-mannosyl-glycoprotein 2-beta-N-acetylglucosaminyltransferase (446 aa).

The Cytoplasmic segment spans residues 1 to 9; it reads MRFRIYKRK. A helical; Signal-anchor for type II membrane protein membrane pass occupies residues 10 to 29; it reads VLILTFVVAACGFVLWSSNG. Residues 30 to 446 are Lumenal-facing; it reads RQRKNEALAP…ELCKSYRRLQ (417 aa). N-linked (GlcNAc...) asparagine glycans are attached at residues Asn69 and Asn86. Substrate is bound by residues 123–127 and Asp154; that span reads QVHNR. Cysteines 196 and 210 form a disulfide. Residue 229-233 coordinates substrate; the sequence is QTKHH. A Mn(2+)-binding site is contributed by Asp261. Cys283 and Cys286 are joined by a disulfide. Position 298 (Arg298) interacts with substrate. 3 disulfides stabilise this stretch: Cys334–Cys357, Cys339–Cys439, and Cys378–Cys386. Mn(2+) is bound at residue His374.

This sequence belongs to the glycosyltransferase 16 (GT16) protein family. In terms of assembly, homodimer. It depends on Mn(2+) as a cofactor.

It localises to the golgi apparatus membrane. It catalyses the reaction an N(4)-{beta-D-GlcNAc-(1-&gt;2)-alpha-D-Man-(1-&gt;3)-[alpha-D-Man-(1-&gt;6)]-beta-D-Man-(1-&gt;4)-beta-D-GlcNAc-(1-&gt;4)-beta-D-GlcNAc}-L-asparaginyl-[protein] + UDP-N-acetyl-alpha-D-glucosamine = N(4)-{beta-D-GlcNAc-(1-&gt;2)-alpha-D-Man-(1-&gt;3)-[beta-D-GlcNAc-(1-&gt;2)-alpha-D-Man-(1-&gt;6)]-beta-D-Man-(1-&gt;4)-beta-D-GlcNAc-(1-&gt;4)-beta-D-GlcNAc}-L-asparaginyl-[protein] + UDP + H(+). The protein operates within protein modification; protein glycosylation. Functionally, plays an essential role in protein N-glycosylation. Catalyzes the transfer of N-acetylglucosamine (GlcNAc) onto the free terminal mannose moiety in the core structure of the nascent N-linked glycan chain, giving rise to the second branch in complex glycans. The chain is Alpha-1,6-mannosyl-glycoprotein 2-beta-N-acetylglucosaminyltransferase (MGAT2) from Sus scrofa (Pig).